The sequence spans 238 residues: Large ribosomal subunit protein uL3 (238 aa).

Glutamine 157 carries the N5-methylglutamine modification.

It belongs to the universal ribosomal protein uL3 family. As to quaternary structure, part of the 50S ribosomal subunit. Forms a cluster with proteins L14 and L19. Methylated by PrmB.

Functionally, one of the primary rRNA binding proteins, it binds directly near the 3'-end of the 23S rRNA, where it nucleates assembly of the 50S subunit. In Ruthia magnifica subsp. Calyptogena magnifica, this protein is Large ribosomal subunit protein uL3.